The sequence spans 1349 residues: Periaxin (1349 aa).

A Phosphoserine modification is found at S7. Positions 16–99 (LVEIIVETEA…YKVSFCLKRT (84 aa)) constitute a PDZ domain. A Nuclear export signal motif is present at residues 70-84 (VFFENFKYEDALRLL). S133 bears the Phosphoserine mark. A run of 41 repeats spans residues 402-406 (PPEVK), 410-414 (GPEVK), 418-422 (VPEVK), 426-430 (MPEPV), 431-435 (LPEVR), 436-440 (LPEVE), 444-448 (VSEMK), 452-456 (VPEMA), 457-461 (VPEVR), 462-466 (LPEVQ), 467-471 (LPKVP), 472-476 (EMKLP), 477-481 (EVKLP), 485-489 (EMAVP), 493-497 (LPEVQ), 501-505 (VPEMK), 506-510 (LPEVK), 514-518 (VPEMA), 519-523 (VPEVR), 524-528 (LPEVQ), 532-536 (VPEMK), 537-549 (LPKVPEMKCPEMK), 553-557 (VPEMA), 558-562 (VPEVR), 563-567 (LPEVQ), 571-575 (VPEVK), 576-580 (LPEVK), 589-593 (VPEMA), 594-598 (VPEVH), 599-603 (LPEVQ), 612-616 (VPDVK), 617-621 (LPEVK), 622-626 (LPEIK), 630-634 (VPEMV), 635-639 (VPDVH), 643-647 (VHLPK), 648-652 (VSEMR), 653-657 (LPEVQ), 661-665 (VPEVH), 669-673 (APEVK), and 674-678 (LPKAP). The 41 X 5 AA approximate tandem repeats of [LVMGIE]-[PSM]-[EDKA]-[LIVMA]-[AQKHPRT]; that may have a tripeptide spacer of [ALKD]-[IPV]-[KPH] stretch occupies residues 402-678 (PPEVKVPKGP…APEVKLPKAP (277 aa)). Residues S794 and S974 each carry the phosphoserine modification. A compositionally biased stretch (basic and acidic residues) spans 1207–1218 (AKEGAEEGEKAK). Residues 1207–1349 (AKEGAEEGEK…RMEGAQAAVI (143 aa)) are disordered. A compositionally biased stretch (low complexity) spans 1232 to 1242 (SEAVSGEGSPS). 6 positions are modified to phosphoserine: S1236, S1240, S1242, S1289, S1295, and S1327.

The protein belongs to the periaxin family. Homodimer (via PDZ domain). Interacts with SCN10A. Found in a complex with SCN10A. Interacts with DRP2. Identified in a dystroglycan complex that contains at least PRX, DRP2, UTRN, DMD and DAG1. Detected in a complex composed of at least EZR, AHNAK, PPL and PRX. Identified in a complex with EZR, AHNAK, BFSP1, BFSP2, ANK2, PLEC, VIM and spectrin. In terms of tissue distribution, detected in eye lens (at protein level).

Its subcellular location is the nucleus. It is found in the cytoplasm. The protein resides in the cell membrane. The protein localises to the cell junction. It localises to the adherens junction. Its function is as follows. Scaffolding protein that functions as part of a dystroglycan complex in Schwann cells, and as part of EZR and AHNAK-containing complexes in eye lens fiber cells. Required for the maintenance of the peripheral myelin sheath that is essential for normal transmission of nerve impulses and normal perception of sensory stimuli. Required for normal transport of MBP mRNA from the perinuclear to the paranodal regions. Required for normal remyelination after nerve injury. Required for normal elongation of Schwann cells and normal length of the internodes between the nodes of Ranvier. The demyelinated nodes of Ranvier permit saltatory transmission of nerve impulses; shorter internodes cause slower transmission of nerve impulses. Required for the formation of appositions between the abaxonal surface of the myelin sheath and the Schwann cell plasma membrane; the Schwann cell cytoplasm is restricted to regions between these appositions. Required for the formation of Cajal bands and of Schmidt-Lanterman incisures that correspond to short, cytoplasm-filled regions on myelinated nerves. Recruits DRP2 to the Schwann cell plasma membrane. Required for normal protein composition of the eye lens fiber cell plasma membrane and normal eye lens fiber cell morphology. This chain is Periaxin (PRX), found in Bos taurus (Bovine).